A 1113-amino-acid chain; its full sequence is Carbamoyl phosphate synthase large chain (1113 aa).

The segment at 1 to 407 (MPKRSDINHV…ALNKALRSLE (407 aa)) is carboxyphosphate synthetic domain. Residues Arg134, Arg174, Gly180, Gly181, Glu213, Ile215, Glu220, Gly246, Val247, His248, Gln290, and Glu304 each contribute to the ATP site. Residues 138 to 333 (KDIVTTIGGE…IAKMAAKLAI (196 aa)) form the ATP-grasp 1 domain. Mg(2+)-binding residues include Gln290, Glu304, and Asn306. 3 residues coordinate Mn(2+): Gln290, Glu304, and Asn306. Residues 408–565 (TKQQGFWTKP…ELDPAAESEV (158 aa)) form an oligomerization domain region. The interval 566-967 (APQTEREKVL…AYAKAEAGAF (402 aa)) is carbamoyl phosphate synthetic domain. Residues 695 to 886 (GALLNREQLP…LAKAASRIAV (192 aa)) form the ATP-grasp 2 domain. 10 residues coordinate ATP: Arg731, Arg770, Leu772, Glu777, Gly802, Ile803, His804, Ser805, Gln845, and Glu857. Positions 845, 857, and 859 each coordinate Mg(2+). 3 residues coordinate Mn(2+): Gln845, Glu857, and Asn859. The region spanning 968–1113 (GALPTEGTVF…LQELDHAVKA (146 aa)) is the MGS-like domain. The interval 968 to 1113 (GALPTEGTVF…LQELDHAVKA (146 aa)) is allosteric domain.

Belongs to the CarB family. As to quaternary structure, composed of two chains; the small (or glutamine) chain promotes the hydrolysis of glutamine to ammonia, which is used by the large (or ammonia) chain to synthesize carbamoyl phosphate. Tetramer of heterodimers (alpha,beta)4. It depends on Mg(2+) as a cofactor. The cofactor is Mn(2+).

It carries out the reaction hydrogencarbonate + L-glutamine + 2 ATP + H2O = carbamoyl phosphate + L-glutamate + 2 ADP + phosphate + 2 H(+). The catalysed reaction is hydrogencarbonate + NH4(+) + 2 ATP = carbamoyl phosphate + 2 ADP + phosphate + 2 H(+). It functions in the pathway amino-acid biosynthesis; L-arginine biosynthesis; carbamoyl phosphate from bicarbonate: step 1/1. The protein operates within pyrimidine metabolism; UMP biosynthesis via de novo pathway; (S)-dihydroorotate from bicarbonate: step 1/3. Functionally, large subunit of the glutamine-dependent carbamoyl phosphate synthetase (CPSase). CPSase catalyzes the formation of carbamoyl phosphate from the ammonia moiety of glutamine, carbonate, and phosphate donated by ATP, constituting the first step of 2 biosynthetic pathways, one leading to arginine and/or urea and the other to pyrimidine nucleotides. The large subunit (synthetase) binds the substrates ammonia (free or transferred from glutamine from the small subunit), hydrogencarbonate and ATP and carries out an ATP-coupled ligase reaction, activating hydrogencarbonate by forming carboxy phosphate which reacts with ammonia to form carbamoyl phosphate. The protein is Carbamoyl phosphate synthase large chain of Corynebacterium glutamicum (strain ATCC 13032 / DSM 20300 / JCM 1318 / BCRC 11384 / CCUG 27702 / LMG 3730 / NBRC 12168 / NCIMB 10025 / NRRL B-2784 / 534).